The sequence spans 187 residues: Peptide deformylase (187 aa).

The Fe cation site is built by Cys114 and His157. Glu158 is an active-site residue. Fe cation is bound at residue His161.

The protein belongs to the polypeptide deformylase family. Fe(2+) serves as cofactor.

It catalyses the reaction N-terminal N-formyl-L-methionyl-[peptide] + H2O = N-terminal L-methionyl-[peptide] + formate. Its function is as follows. Removes the formyl group from the N-terminal Met of newly synthesized proteins. Requires at least a dipeptide for an efficient rate of reaction. N-terminal L-methionine is a prerequisite for activity but the enzyme has broad specificity at other positions. In Enterococcus faecalis (strain ATCC 700802 / V583), this protein is Peptide deformylase.